The following is a 99-amino-acid chain: Ubiquitin-related modifier 1 (99 aa).

G99 carries the post-translational modification 1-thioglycine. G99 is covalently cross-linked (Glycyl lysine isopeptide (Gly-Lys) (interchain with K-? in acceptor proteins)).

Belongs to the URM1 family. C-terminal thiocarboxylation occurs in 2 steps, it is first acyl-adenylated (-COAMP) via the hesA/moeB/thiF part of UBA4, then thiocarboxylated (-COSH) via the rhodanese domain of UBA4.

It localises to the cytoplasm. Its pathway is tRNA modification; 5-methoxycarbonylmethyl-2-thiouridine-tRNA biosynthesis. In terms of biological role, acts as a sulfur carrier required for 2-thiolation of mcm(5)S(2)U at tRNA wobble positions of cytosolic tRNA(Lys), tRNA(Glu) and tRNA(Gln). Serves as sulfur donor in tRNA 2-thiolation reaction by being thiocarboxylated (-COSH) at its C-terminus by the MOCS3 homolog UBA4. The sulfur is then transferred to tRNA to form 2-thiolation of mcm(5)S(2)U. Prior mcm(5) tRNA modification by the elongator complex is required for 2-thiolation. Also acts as a ubiquitin-like protein (UBL) that is covalently conjugated via an isopeptide bond to lysine residues of target proteins such as AHP1. The thiocarboxylated form serves as substrate for conjugation and oxidative stress specifically induces the formation of UBL-protein conjugates. This is Ubiquitin-related modifier 1 from Yarrowia lipolytica (strain CLIB 122 / E 150) (Yeast).